A 22-amino-acid polypeptide reads, in one-letter code: Unknown endosperm protein L (22 aa).

Basic and acidic residues predominate over residues 1 to 11 (MRHSNKIRDEE). Residues 1–22 (MRHSNKIRDEEMVNNTRLNXXA) form a disordered region. Polar residues predominate over residues 13–22 (VNNTRLNXXA).

In terms of processing, the N-terminus is blocked.

The polypeptide is Unknown endosperm protein L (Hordeum vulgare (Barley)).